The chain runs to 217 residues: Adenylate kinase (217 aa).

10 to 15 provides a ligand contact to ATP; the sequence is GAGKGT. Positions 30-59 are NMP; that stretch reads STGDMLRAAVKAGTEMGLAAKKVMDAGGLV. Residues threonine 31, arginine 36, 57 to 59, 85 to 88, and glutamine 92 each bind AMP; these read GLV and GFPR. The tract at residues 122–159 is LID; sequence GRRSHPASGRTYHVKFNPPKVDGVDDVTGEPLVQRDDD. ATP-binding positions include arginine 123 and 132–133; that span reads TY. AMP-binding residues include arginine 156 and arginine 167. Glycine 203 is a binding site for ATP.

Belongs to the adenylate kinase family. As to quaternary structure, monomer.

The protein resides in the cytoplasm. It carries out the reaction AMP + ATP = 2 ADP. The protein operates within purine metabolism; AMP biosynthesis via salvage pathway; AMP from ADP: step 1/1. Catalyzes the reversible transfer of the terminal phosphate group between ATP and AMP. Plays an important role in cellular energy homeostasis and in adenine nucleotide metabolism. The sequence is that of Adenylate kinase from Leptothrix cholodnii (strain ATCC 51168 / LMG 8142 / SP-6) (Leptothrix discophora (strain SP-6)).